A 292-amino-acid chain; its full sequence is 2-(5''-triphosphoribosyl)-3'-dephosphocoenzyme-A synthase (292 aa).

Belongs to the CitG/MdcB family.

The enzyme catalyses 3'-dephospho-CoA + ATP = 2'-(5''-triphospho-alpha-D-ribosyl)-3'-dephospho-CoA + adenine. Catalyzes the formation of 2-(5''-triphosphoribosyl)-3'-dephosphocoenzyme-A, the precursor of the prosthetic group of the holo-acyl carrier protein (gamma chain) of citrate lyase, from ATP and dephospho-CoA. The protein is 2-(5''-triphosphoribosyl)-3'-dephosphocoenzyme-A synthase of Escherichia coli O7:K1 (strain IAI39 / ExPEC).